The sequence spans 315 residues: Homocysteine S-methyltransferase YbgG (315 aa).

In terms of domain architecture, Hcy-binding spans 2-309 (NPIQHILDTY…ENIQEIAAWA (308 aa)). Residues Cys229, Cys294, and Cys295 each contribute to the Zn(2+) site.

It depends on Zn(2+) as a cofactor.

It catalyses the reaction S-methyl-L-methionine + L-homocysteine = 2 L-methionine + H(+). The polypeptide is Homocysteine S-methyltransferase YbgG (ybgG) (Bacillus subtilis (strain 168)).